The chain runs to 131 residues: Holo-[acyl-carrier-protein] synthase (131 aa).

The Mg(2+) site is built by Asp-8 and Glu-63.

This sequence belongs to the P-Pant transferase superfamily. AcpS family. Requires Mg(2+) as cofactor.

The protein resides in the cytoplasm. It carries out the reaction apo-[ACP] + CoA = holo-[ACP] + adenosine 3',5'-bisphosphate + H(+). Its function is as follows. Transfers the 4'-phosphopantetheine moiety from coenzyme A to a Ser of acyl-carrier-protein. This Shewanella pealeana (strain ATCC 700345 / ANG-SQ1) protein is Holo-[acyl-carrier-protein] synthase.